The primary structure comprises 96 residues: MAKQEVAAKKVKRPTALKRDLQNKKKRLNNKIYKSRVRTAVRSFQESLVKGDETLSKAKLDEVYSILDKCAKKGVFKLNKVSRTKSRLAARAAAKA.

The interval Met-1 to Arg-27 is disordered.

It belongs to the bacterial ribosomal protein bS20 family.

In terms of biological role, binds directly to 16S ribosomal RNA. The polypeptide is Small ribosomal subunit protein bS20 (Protochlamydia amoebophila (strain UWE25)).